The chain runs to 315 residues: Lamassu protein LmuA (315 aa).

Its function is as follows. Component of antiviral defense system Lamassu type I, composed of LmuA and LmuB. Expression of Lamassu type I in B.subtilis (strain BEST7003) confers resistance to phages phi3T, SpBeta and SPR. In Bacillus sp. (strain NCIM 5461 / CCTCC AB 2011126 / NIO-1130), this protein is Lamassu protein LmuA.